A 412-amino-acid chain; its full sequence is Phosphoribosylamine--glycine ligase (412 aa).

One can recognise an ATP-grasp domain in the interval Lys108 to Ala309. An ATP-binding site is contributed by Leu134–Ser190. The Mg(2+) site is built by Glu279 and Asn281.

It belongs to the GARS family. The cofactor is Mg(2+). Mn(2+) is required as a cofactor.

It carries out the reaction 5-phospho-beta-D-ribosylamine + glycine + ATP = N(1)-(5-phospho-beta-D-ribosyl)glycinamide + ADP + phosphate + H(+). It participates in purine metabolism; IMP biosynthesis via de novo pathway; N(1)-(5-phospho-D-ribosyl)glycinamide from 5-phospho-alpha-D-ribose 1-diphosphate: step 2/2. The chain is Phosphoribosylamine--glycine ligase from Lactococcus lactis subsp. lactis (strain IL1403) (Streptococcus lactis).